Reading from the N-terminus, the 274-residue chain is Nitrogenase iron protein (274 aa).

Residue 8–15 (GKGGIGKS) participates in ATP binding. A [4Fe-4S] cluster-binding site is contributed by C94. R97 carries the ADP-ribosylarginine; by dinitrogenase reductase ADP-ribosyltransferase modification. A [4Fe-4S] cluster-binding site is contributed by C131.

This sequence belongs to the NifH/BchL/ChlL family. Homodimer. [4Fe-4S] cluster is required as a cofactor. In terms of processing, the reversible ADP-ribosylation of Arg-97 inactivates the nitrogenase reductase and regulates nitrogenase activity.

It catalyses the reaction N2 + 8 reduced [2Fe-2S]-[ferredoxin] + 16 ATP + 16 H2O = H2 + 8 oxidized [2Fe-2S]-[ferredoxin] + 2 NH4(+) + 16 ADP + 16 phosphate + 6 H(+). Functionally, the key enzymatic reactions in nitrogen fixation are catalyzed by the nitrogenase complex, which has 2 components: the iron protein and the molybdenum-iron protein. The chain is Nitrogenase iron protein from Chlorobium phaeobacteroides (strain BS1).